The primary structure comprises 41 residues: Photosystem I reaction center subunit IX (41 aa).

The helical transmembrane segment at 7 to 27 (YLSTAPVLLTLWMTFTAGFII) threads the bilayer.

This sequence belongs to the PsaJ family.

It localises to the plastid. Its subcellular location is the chloroplast thylakoid membrane. In terms of biological role, may help in the organization of the PsaE and PsaF subunits. This is Photosystem I reaction center subunit IX from Trieres chinensis (Marine centric diatom).